The sequence spans 908 residues: Vacuolar membrane protease (908 aa).

The disordered stretch occupies residues 1 to 25; sequence MTSGEEEEGTREQVPVSQPTGTTSI. Topologically, residues 1–48 are cytoplasmic; it reads MTSGEEEEGTREQVPVSQPTGTTSIVSTKEKQPNIFIRAIRATFGYRK. The span at 15-25 shows a compositional bias: polar residues; sequence PVSQPTGTTSI. A helical transmembrane segment spans residues 49-69; sequence TSLTLFVLLTIFFTVAFSSYD. Residues 70 to 381 lie on the Vacuolar side of the membrane; that stretch reads NSLDFTIDLP…FSTSVTTLNT (312 aa). N-linked (GlcNAc...) asparagine glycans are attached at residues N143 and N162. Residues H176 and D188 each contribute to the Zn(2+) site. E221 functions as the Proton acceptor in the catalytic mechanism. 3 residues coordinate Zn(2+): E222, E247, and H319. N354 carries an N-linked (GlcNAc...) asparagine glycan. The helical transmembrane segment at 382 to 402 threads the bilayer; sequence INMVLIVLFPVLSGPLLFITV. Residues 403–411 are Cytoplasmic-facing; that stretch reads RYKKWNIGT. The chain crosses the membrane as a helical span at residues 412-432; it reads ANLFSLPLAIVITSLVGAVVV. Residues 433–449 are Vacuolar-facing; it reads NQGFRLVNEFLPASRPM. The helical transmembrane segment at 450–470 threads the bilayer; the sequence is LLVTTTTSILLLTYYILLNGI. Residues 471–480 are Cytoplasmic-facing; it reads NFVSPSGDQK. The helical transmembrane segment at 481 to 501 threads the bilayer; it reads LVSIIQISFIYWIALIFVTRG. Residues 502–514 lie on the Vacuolar side of the membrane; it reads LSQNAIGDDHTGE. Residues 515–535 traverse the membrane as a helical segment; the sequence is FAFTILFLLEATASLFGLIGW. At 536 to 602 the chain is on the cytoplasmic side; sequence TFTRSVKEPT…MQHFGYDWSL (67 aa). The disordered stretch occupies residues 543–584; it reads EPTGDEEPLLNGRMERYVDGSDDEDDVEEEDDEDQSEEENHQ. Residues 562 to 579 show a composition bias toward acidic residues; it reads GSDDEDDVEEEDDEDQSE. A helical membrane pass occupies residues 603–623; sequence QFLLIVPISSLVIYNSGWLVI. Topologically, residues 624-638 are vacuolar; it reads DGINKSIQESLVAEN. A glycan (N-linked (GlcNAc...) asparagine) is linked at N627. A helical membrane pass occupies residues 639-659; sequence FIYLIIQLFSQFWILPILPFV. Residues 660–664 are Cytoplasmic-facing; it reads YKLNR. The helical transmembrane segment at 665-685 threads the bilayer; sequence FMVLGLIAFALVGVTLISSVD. Residues 686 to 908 lie on the Vacuolar side of the membrane; that stretch reads PFNQDNPLKL…LVSLTNRIEV (223 aa). Residues N752 and N764 are each glycosylated (N-linked (GlcNAc...) asparagine).

Belongs to the peptidase M28 family. It depends on Zn(2+) as a cofactor.

It localises to the vacuole membrane. May be involved in vacuolar sorting and osmoregulation. The sequence is that of Vacuolar membrane protease from Candida tropicalis (strain ATCC MYA-3404 / T1) (Yeast).